We begin with the raw amino-acid sequence, 440 residues long: Chromosome partition protein MukF (440 aa).

Residues 208 to 236 are leucine-zipper; it reads LSETSGTLRELQDTLEAAGDKLQANLLRI.

This sequence belongs to the MukF family. As to quaternary structure, interacts, and probably forms a ternary complex, with MukE and MukB via its C-terminal region. The complex formation is stimulated by calcium or magnesium. It is required for an interaction between MukE and MukB.

Its subcellular location is the cytoplasm. The protein resides in the nucleoid. Its function is as follows. Involved in chromosome condensation, segregation and cell cycle progression. May participate in facilitating chromosome segregation by condensation DNA from both sides of a centrally located replisome during cell division. Not required for mini-F plasmid partitioning. Probably acts via its interaction with MukB and MukE. Overexpression results in anucleate cells. It has a calcium binding activity. This chain is Chromosome partition protein MukF, found in Salmonella gallinarum (strain 287/91 / NCTC 13346).